Here is a 241-residue protein sequence, read N- to C-terminus: MNKTTLLYTGKAKQVYATDDPDVLWMAYTNQATALNGEKKAQIAHKGELNRAISTLLFKELTAVGIPTHYLDSPDSTTMIVKKAAMLPLEVVVRNYASGHFVTKFNVKPMMKLDPPIHEYYYKSDELGDPFMNEAQIFALHEATPEQLKQVRALTDRINTYLMQRFAAIGITLVDFKLEYGTLKDGTLVLADELSPDNFRLVDQQTGASLDKDVFRQNRGPLTPVYEEVLSRLQEKGAAHV.

The protein belongs to the SAICAR synthetase family.

It carries out the reaction 5-amino-1-(5-phospho-D-ribosyl)imidazole-4-carboxylate + L-aspartate + ATP = (2S)-2-[5-amino-1-(5-phospho-beta-D-ribosyl)imidazole-4-carboxamido]succinate + ADP + phosphate + 2 H(+). It functions in the pathway purine metabolism; IMP biosynthesis via de novo pathway; 5-amino-1-(5-phospho-D-ribosyl)imidazole-4-carboxamide from 5-amino-1-(5-phospho-D-ribosyl)imidazole-4-carboxylate: step 1/2. The protein is Phosphoribosylaminoimidazole-succinocarboxamide synthase of Lacticaseibacillus casei (strain BL23) (Lactobacillus casei).